Here is a 377-residue protein sequence, read N- to C-terminus: RCC1 domain-containing protein 1 (377 aa).

The interaction with KDM8 stretch occupies residues 1-172; sequence MAEKRHGAWF…VRQLELGAEH (172 aa). One copy of the RCC1 1 repeat lies at 6–57; it reads HGAWFGFGFCGFGQALGSGNSHHSVYSPEPLHASDDICQVSAGWSYTALVTR. Arg144 is modified ((3R)-3-hydroxyarginine). RCC1 repeat units lie at residues 179–230, 232–289, and 319–372; these read AGQV…CLSE, GDIY…IAIQ, and TGEL…VYAM.

In terms of assembly, found in a complex with KDM8. Interacts (via N-terminus) with KDM8 (via N-terminus). In terms of processing, specifically hydroxylated (with R stereochemistry) at C-3 of ARG-141 by KDM8.

The protein localises to the chromosome. Plays a role in transcriptional repression of satellite repeats, possibly by regulating H3K36 methylation levels in centromeric regions together with KDM8. Possibly together with KDM8, is involved in proper mitotic spindle organization and chromosome segregation. Plays a role in regulating alpha-tubulin deacetylation and cytoskeletal microtubule stability, thereby promoting cell migration and TGF-beta-induced epithelial to mesenchymal transition (EMT), potentially through the inhibition of KDM8. The protein is RCC1 domain-containing protein 1 (Rccd1) of Mus musculus (Mouse).